The following is a 346-amino-acid chain: Protein RecA (346 aa).

65–72 (GPESSGKT) contributes to the ATP binding site.

Belongs to the RecA family.

It localises to the cytoplasm. Can catalyze the hydrolysis of ATP in the presence of single-stranded DNA, the ATP-dependent uptake of single-stranded DNA by duplex DNA, and the ATP-dependent hybridization of homologous single-stranded DNAs. It interacts with LexA causing its activation and leading to its autocatalytic cleavage. The protein is Protein RecA of Enterococcus mundtii.